The following is a 239-amino-acid chain: Leucine-rich repeat-containing protein 57 (239 aa).

G2 is lipidated: N-myristoyl glycine. LRR repeat units lie at residues 39–60, 63–85, 86–107, 109–130, 132–153, 154–175, 177–197, and 202–222; these read NLRTIDLSNNKIDSLPPLIIGK, LLKSLSLNNNKLTVLPDELCNLK, KLETLSLNNNHLRELPSTFGQL, ALKTLSLSGNQLGALPPQLCCL, HLDVVDLSKNQIRSIPDTVGEL, QAIELNLNQNQISQLSVKISCC, RLKVLRLEENCLELSMLPQSI, and QICLLAVEGNLFEIKKFRELE.

It is found in the membrane. This Mus musculus (Mouse) protein is Leucine-rich repeat-containing protein 57 (Lrrc57).